A 360-amino-acid chain; its full sequence is Phospho-N-acetylmuramoyl-pentapeptide-transferase (360 aa).

The next 10 membrane-spanning stretches (helical) occupy residues Arg-24 to Ile-44, Gly-69 to Trp-89, Trp-92 to Phe-112, Met-133 to Asn-153, Ile-158 to Val-178, Gly-199 to Ser-219, Val-239 to Tyr-259, Val-263 to Ile-283, Phe-288 to Val-308, and Gln-337 to Leu-357.

The protein belongs to the glycosyltransferase 4 family. MraY subfamily. It depends on Mg(2+) as a cofactor.

The protein localises to the cell inner membrane. The catalysed reaction is UDP-N-acetyl-alpha-D-muramoyl-L-alanyl-gamma-D-glutamyl-meso-2,6-diaminopimeloyl-D-alanyl-D-alanine + di-trans,octa-cis-undecaprenyl phosphate = di-trans,octa-cis-undecaprenyl diphospho-N-acetyl-alpha-D-muramoyl-L-alanyl-D-glutamyl-meso-2,6-diaminopimeloyl-D-alanyl-D-alanine + UMP. It participates in cell wall biogenesis; peptidoglycan biosynthesis. In terms of biological role, catalyzes the initial step of the lipid cycle reactions in the biosynthesis of the cell wall peptidoglycan: transfers peptidoglycan precursor phospho-MurNAc-pentapeptide from UDP-MurNAc-pentapeptide onto the lipid carrier undecaprenyl phosphate, yielding undecaprenyl-pyrophosphoryl-MurNAc-pentapeptide, known as lipid I. The chain is Phospho-N-acetylmuramoyl-pentapeptide-transferase from Neisseria gonorrhoeae (strain ATCC 700825 / FA 1090).